A 426-amino-acid polypeptide reads, in one-letter code: Transcriptional enhancer factor TEF-1 (426 aa).

N-acetylmethionine is present on M1. A compositionally biased stretch (polar residues) spans 1–12 (MEPSSWSGSESP). The interval 1-31 (MEPSSWSGSESPAENMERMSDSADKPIDNDA) is disordered. S11 bears the Phosphoserine mark. A compositionally biased stretch (basic and acidic residues) spans 15 to 28 (NMERMSDSADKPID). Residues 28–104 (DNDAEGVWSP…QVLARRKSRD (77 aa)) constitute a DNA-binding region (TEA). Position 108 is an N6-lactoyllysine (K108). The segment at 167 to 426 (GSSQDVKPFV…QHHIYRLVKD (260 aa)) is transcriptional activation.

In terms of assembly, interacts with YAP1 and WWTR1/TAZ. In terms of processing, lactylation by AARS1 promotes nuclear localization and stabilization of YAP1, leading to increased Hippo signaling pathway. Delactylated by SIRT1. In developing skeletal muscle and myocardium, in mitotic neuroblasts both in the brain and spinal cord. At later stages of embryogenesis expressed in several developing structures such as the olfactory system, the intestine, and the kidney.

The protein localises to the nucleus. In terms of biological role, transcription factor which plays a key role in the Hippo signaling pathway, a pathway involved in organ size control and tumor suppression by restricting proliferation and promoting apoptosis. The core of this pathway is composed of a kinase cascade wherein MST1/MST2, in complex with its regulatory protein SAV1, phosphorylates and activates LATS1/2 in complex with its regulatory protein MOB1, which in turn phosphorylates and inactivates YAP1 oncoprotein and WWTR1/TAZ. Acts by mediating gene expression of YAP1 and WWTR1/TAZ, thereby regulating cell proliferation, migration and epithelial mesenchymal transition (EMT) induction. Binds specifically and cooperatively to the SPH and GT-IIC 'enhansons' (5'-GTGGAATGT-3') and activates transcription in vivo in a cell-specific manner. The activation function appears to be mediated by a limiting cell-specific transcriptional intermediary factor (TIF). Involved in cardiac development. Binds to the M-CAT motif. In Mus musculus (Mouse), this protein is Transcriptional enhancer factor TEF-1 (Tead1).